We begin with the raw amino-acid sequence, 737 residues long: Translation initiation factor IF-2 (737 aa).

Residues 69-80 (EKKEEKPIRKIM) are compositionally biased toward basic and acidic residues. The disordered stretch occupies residues 69–130 (EKKEEKPIRK…HKNKGKKKKG (62 aa)). Composition is skewed to basic residues over residues 95 to 108 (NNKK…KNKK) and 121 to 130 (HKNKGKKKKG). The region spanning 237 to 404 (ERPPVITIMG…TILITAEILE (168 aa)) is the tr-type G domain. The tract at residues 246–253 (GHVDHGKT) is G1. A GTP-binding site is contributed by 246–253 (GHVDHGKT). A G2 region spans residues 271 to 275 (GITQK). The G3 stretch occupies residues 292–295 (DTPG). Residues 292–296 (DTPGH) and 346–349 (NKID) each bind GTP. The segment at 346 to 349 (NKID) is G4. The tract at residues 382-384 (SAK) is G5.

The protein belongs to the TRAFAC class translation factor GTPase superfamily. Classic translation factor GTPase family. IF-2 subfamily.

Its subcellular location is the cytoplasm. Its function is as follows. One of the essential components for the initiation of protein synthesis. Protects formylmethionyl-tRNA from spontaneous hydrolysis and promotes its binding to the 30S ribosomal subunits. Also involved in the hydrolysis of GTP during the formation of the 70S ribosomal complex. In Fusobacterium nucleatum subsp. nucleatum (strain ATCC 25586 / DSM 15643 / BCRC 10681 / CIP 101130 / JCM 8532 / KCTC 2640 / LMG 13131 / VPI 4355), this protein is Translation initiation factor IF-2.